The following is a 150-amino-acid chain: Large ribosomal subunit protein uL11 (150 aa).

Belongs to the universal ribosomal protein uL11 family. In terms of assembly, part of the ribosomal stalk of the 50S ribosomal subunit. Interacts with L10 and the large rRNA to form the base of the stalk. L10 forms an elongated spine to which L12 dimers bind in a sequential fashion forming a multimeric L10(L12)X complex. One or more lysine residues are methylated.

Functionally, forms part of the ribosomal stalk which helps the ribosome interact with GTP-bound translation factors. The chain is Large ribosomal subunit protein uL11 from Azobacteroides pseudotrichonymphae genomovar. CFP2.